The sequence spans 184 residues: MATALALRSLYRARPSLRCPPVELPWAPRRGHRLSPADDELYQRTRISLLQREAAQAMYIDSYNSRGFMINGNRVLGPCALLPHSVVQWNVGSHQDITEDSFSLFWLLEPRIEIVVVGTGDRTERLQSQVLQAMRQRGIAVEVQDTPNACATFNFLCHEGRVTGAALIPPPGGTSLTSLGQAAQ.

It belongs to the NDUFAF3 family. As to quaternary structure, interacts with NDUFAF4, NDUFS2 and NDUFS3.

The protein resides in the nucleus. Its subcellular location is the mitochondrion inner membrane. Essential factor for the assembly of mitochondrial NADH:ubiquinone oxidoreductase complex (complex I). The polypeptide is NADH dehydrogenase [ubiquinone] 1 alpha subcomplex assembly factor 3 (NDUFAF3) (Homo sapiens (Human)).